The chain runs to 37 residues: Large ribosomal subunit protein bL36 (37 aa).

It belongs to the bacterial ribosomal protein bL36 family.

This is Large ribosomal subunit protein bL36 from Leptothrix cholodnii (strain ATCC 51168 / LMG 8142 / SP-6) (Leptothrix discophora (strain SP-6)).